The primary structure comprises 322 residues: uncharacterized protein (322 aa).

The signal sequence occupies residues 1-27 (MKRLFWNLKHKKAWLVLLLGTGMILSS). Cys-28 is lipidated: N-palmitoyl cysteine. Cys-28 carries S-diacylglycerol cysteine lipidation. Residues 235 to 254 (DNSTNPNAPGSGQGDSTPPA) are compositionally biased toward polar residues. The interval 235–298 (DNSTNPNAPG…AVQRSQKSYG (64 aa)) is disordered. Gly residues predominate over residues 257 to 267 (GEGGGSDGSSG). Positions 274-296 (NGQNTTPTSPQSSQPAVQRSQKS) are enriched in polar residues.

The protein localises to the cell membrane. This is an uncharacterized protein from Mycoplasma genitalium (strain ATCC 33530 / DSM 19775 / NCTC 10195 / G37) (Mycoplasmoides genitalium).